Consider the following 165-residue polypeptide: Deoxyuridine 5'-triphosphate nucleotidohydrolase (165 aa).

The protein belongs to the dUTPase family. As to quaternary structure, homotrimer. The cofactor is Mg(2+).

Its subcellular location is the host cytoplasm. It is found in the virion. The enzyme catalyses dUTP + H2O = dUMP + diphosphate + H(+). The viral dUTPase may play a role in lowering the dUTP concentration in natural infections to minimize misincorporation of deoxyuridine into the viral DNA and ensure the fidelity of genome replication. In Ornithodoros (relapsing fever ticks), this protein is Deoxyuridine 5'-triphosphate nucleotidohydrolase.